The primary structure comprises 257 residues: Imidazole glycerol phosphate synthase subunit HisF (257 aa).

Active-site residues include Asp11 and Asp130.

It belongs to the HisA/HisF family. Heterodimer of HisH and HisF.

It is found in the cytoplasm. The catalysed reaction is 5-[(5-phospho-1-deoxy-D-ribulos-1-ylimino)methylamino]-1-(5-phospho-beta-D-ribosyl)imidazole-4-carboxamide + L-glutamine = D-erythro-1-(imidazol-4-yl)glycerol 3-phosphate + 5-amino-1-(5-phospho-beta-D-ribosyl)imidazole-4-carboxamide + L-glutamate + H(+). It functions in the pathway amino-acid biosynthesis; L-histidine biosynthesis; L-histidine from 5-phospho-alpha-D-ribose 1-diphosphate: step 5/9. Its function is as follows. IGPS catalyzes the conversion of PRFAR and glutamine to IGP, AICAR and glutamate. The HisF subunit catalyzes the cyclization activity that produces IGP and AICAR from PRFAR using the ammonia provided by the HisH subunit. This Shewanella baltica (strain OS155 / ATCC BAA-1091) protein is Imidazole glycerol phosphate synthase subunit HisF.